Here is a 238-residue protein sequence, read N- to C-terminus: Cysteine-rich venom protein 1 (238 aa).

The first 19 residues, 1–19, serve as a signal peptide directing secretion; the sequence is MIAFIVLLSLAAVLQQSSG. Residues 38–164 enclose the SCP domain; it reads VDKHNALRRS…STKYLYVCQY (127 aa). Intrachain disulfides connect Cys75–Cys153, Cys92–Cys165, Cys148–Cys162, Cys184–Cys191, Cys187–Cys196, Cys200–Cys233, Cys209–Cys227, and Cys218–Cys231. One can recognise a ShKT domain in the interval 200–233; that stretch reads CEYEDTFSNCKALAKKTKCKTEWIKSKCPATCFC.

It belongs to the CRISP family. As to expression, expressed by the venom gland.

Its subcellular location is the secreted. Its function is as follows. Blocks contraction of smooth muscle elicited by high potassium-induced depolarization, but does not block caffeine-stimulated contraction. May target voltage-gated calcium channels on smooth muscle. This Hydrophis hardwickii (Hardwick's spine-bellied seasnake) protein is Cysteine-rich venom protein 1.